The following is a 798-amino-acid chain: Penicillin-binding protein 1A (798 aa).

The Cytoplasmic portion of the chain corresponds to 1-9; that stretch reads MIKKIMTTC. Residues 10–30 traverse the membrane as a helical; Signal-anchor for type II membrane protein segment; that stretch reads FGLVFGLCVFAVGLLAIAILA. Topologically, residues 31-798 are periplasmic; sequence TYPKLPSLDS…SKRQQLDSLF (768 aa). Residues 50-218 form a transglycosylase region; it reads LTVYSADGKI…SAYNPIVNPE (169 aa). Glutamate 88 acts as the Proton donor; for transglycosylase activity in catalysis. Residues 378–700 are transpeptidase; it reads RRALGFAARA…GTIAVPVWVD (323 aa). The Acyl-ester intermediate; for transpeptidase activity role is filled by serine 461. Positions 739 to 798 are disordered; that stretch reads LMLDNGGAAPQPSRRVKEDDGGAAEGGRQEADDESRQDMQETPVLPSNTDSKRQQLDSLF. Basic and acidic residues-rich tracts occupy residues 765 to 777 and 788 to 798; these read GRQE…RQDM and DSKRQQLDSLF.

In the N-terminal section; belongs to the glycosyltransferase 51 family. It in the C-terminal section; belongs to the transpeptidase family.

It is found in the cell inner membrane. The catalysed reaction is [GlcNAc-(1-&gt;4)-Mur2Ac(oyl-L-Ala-gamma-D-Glu-L-Lys-D-Ala-D-Ala)](n)-di-trans,octa-cis-undecaprenyl diphosphate + beta-D-GlcNAc-(1-&gt;4)-Mur2Ac(oyl-L-Ala-gamma-D-Glu-L-Lys-D-Ala-D-Ala)-di-trans,octa-cis-undecaprenyl diphosphate = [GlcNAc-(1-&gt;4)-Mur2Ac(oyl-L-Ala-gamma-D-Glu-L-Lys-D-Ala-D-Ala)](n+1)-di-trans,octa-cis-undecaprenyl diphosphate + di-trans,octa-cis-undecaprenyl diphosphate + H(+). The enzyme catalyses Preferential cleavage: (Ac)2-L-Lys-D-Ala-|-D-Ala. Also transpeptidation of peptidyl-alanyl moieties that are N-acyl substituents of D-alanine.. Its pathway is cell wall biogenesis; peptidoglycan biosynthesis. In terms of biological role, cell wall formation. Synthesis of cross-linked peptidoglycan from the lipid intermediates. The enzyme has a penicillin-insensitive transglycosylase N-terminal domain (formation of linear glycan strands) and a penicillin-sensitive transpeptidase C-terminal domain (cross-linking of the peptide subunits). The protein is Penicillin-binding protein 1A (mrcA) of Neisseria lactamica.